Consider the following 387-residue polypeptide: Formate-dependent phosphoribosylglycinamide formyltransferase (387 aa).

N(1)-(5-phospho-beta-D-ribosyl)glycinamide is bound by residues 15-16 and glutamate 75; that span reads EL. ATP is bound by residues arginine 106, lysine 147, 152 to 157, 187 to 190, and glutamate 195; these read SSGKGQ and EEFI. In terms of domain architecture, ATP-grasp spans 111-301; that stretch reads DLASNELNIR…EFELHLRAVL (191 aa). Positions 260 and 272 each coordinate Mg(2+). N(1)-(5-phospho-beta-D-ribosyl)glycinamide contacts are provided by residues aspartate 279, lysine 349, and 356–357; that span reads RR.

Belongs to the PurK/PurT family. In terms of assembly, homodimer.

It carries out the reaction N(1)-(5-phospho-beta-D-ribosyl)glycinamide + formate + ATP = N(2)-formyl-N(1)-(5-phospho-beta-D-ribosyl)glycinamide + ADP + phosphate + H(+). Its pathway is purine metabolism; IMP biosynthesis via de novo pathway; N(2)-formyl-N(1)-(5-phospho-D-ribosyl)glycinamide from N(1)-(5-phospho-D-ribosyl)glycinamide (formate route): step 1/1. Its function is as follows. Involved in the de novo purine biosynthesis. Catalyzes the transfer of formate to 5-phospho-ribosyl-glycinamide (GAR), producing 5-phospho-ribosyl-N-formylglycinamide (FGAR). Formate is provided by PurU via hydrolysis of 10-formyl-tetrahydrofolate. The polypeptide is Formate-dependent phosphoribosylglycinamide formyltransferase (Prochlorococcus marinus (strain NATL2A)).